The primary structure comprises 91 residues: Small ribosomal subunit protein uS17 (91 aa).

The protein belongs to the universal ribosomal protein uS17 family. As to quaternary structure, part of the 30S ribosomal subunit.

Its function is as follows. One of the primary rRNA binding proteins, it binds specifically to the 5'-end of 16S ribosomal RNA. The protein is Small ribosomal subunit protein uS17 of Salinispora arenicola (strain CNS-205).